A 382-amino-acid polypeptide reads, in one-letter code: D-galactonate dehydratase (382 aa).

A Mg(2+)-binding site is contributed by D183. Catalysis depends on H185, which acts as the Proton donor. Mg(2+) contacts are provided by E209 and E235. The Proton acceptor role is filled by H285.

It belongs to the mandelate racemase/muconate lactonizing enzyme family. GalD subfamily. Requires Mg(2+) as cofactor.

It carries out the reaction D-galactonate = 2-dehydro-3-deoxy-D-galactonate + H2O. The protein operates within carbohydrate acid metabolism; D-galactonate degradation; D-glyceraldehyde 3-phosphate and pyruvate from D-galactonate: step 1/3. Its function is as follows. Catalyzes the dehydration of D-galactonate to 2-keto-3-deoxy-D-galactonate. The chain is D-galactonate dehydratase from Escherichia fergusonii (strain ATCC 35469 / DSM 13698 / CCUG 18766 / IAM 14443 / JCM 21226 / LMG 7866 / NBRC 102419 / NCTC 12128 / CDC 0568-73).